The primary structure comprises 224 residues: UPF0758 protein lin1584 (224 aa).

The 123-residue stretch at 102–224 (VIRCPEDAVK…YISLKEKGYF (123 aa)) folds into the MPN domain. Zn(2+) contacts are provided by His-173, His-175, and Asp-186. The JAMM motif motif lies at 173-186 (HNHPSGDPAPSSED).

This sequence belongs to the UPF0758 family.

The polypeptide is UPF0758 protein lin1584 (Listeria innocua serovar 6a (strain ATCC BAA-680 / CLIP 11262)).